The chain runs to 185 residues: Elongation factor P (185 aa).

This sequence belongs to the elongation factor P family.

Its subcellular location is the cytoplasm. Its pathway is protein biosynthesis; polypeptide chain elongation. In terms of biological role, involved in peptide bond synthesis. Stimulates efficient translation and peptide-bond synthesis on native or reconstituted 70S ribosomes in vitro. Probably functions indirectly by altering the affinity of the ribosome for aminoacyl-tRNA, thus increasing their reactivity as acceptors for peptidyl transferase. This Bordetella petrii (strain ATCC BAA-461 / DSM 12804 / CCUG 43448) protein is Elongation factor P.